The chain runs to 182 residues: Thymidine kinase (182 aa).

8 to 15 (GPMFSGKT) contacts ATP. Residue E85 is the Proton acceptor of the active site. F117 contacts substrate. Residues C142 and C145 each contribute to the Zn(2+) site. 161-165 (IIEIG) contributes to the substrate binding site. Zn(2+) contacts are provided by C174 and C177.

The protein belongs to the thymidine kinase family.

The enzyme catalyses thymidine + ATP = dTMP + ADP + H(+). The sequence is that of Thymidine kinase (TK) from Amsacta moorei entomopoxvirus (AmEPV).